The sequence spans 115 residues: UPF0102 protein NGO_1987 (115 aa).

This sequence belongs to the UPF0102 family.

In Neisseria gonorrhoeae (strain ATCC 700825 / FA 1090), this protein is UPF0102 protein NGO_1987.